Reading from the N-terminus, the 654-residue chain is NADH-ubiquinone oxidoreductase chain 5 (654 aa).

16 helical membrane passes run 1 to 21, 30 to 50, 76 to 96, 113 to 133, 135 to 155, 178 to 198, 200 to 220, 241 to 261, 274 to 294, 301 to 320, 324 to 346, 365 to 385, 406 to 426, 451 to 471, 510 to 530, and 612 to 632; these read MYLA…FLGR, LITC…FYEV, FIYD…SALV, FFAY…GDNY, VMFI…NFWF, FSIG…TTVF, LAPF…LVAA, TPVS…YLLL, LILI…TGLL, VIAY…CGLS, VALF…AGSV, LLPF…ALPF, SGNL…MYSI, PLIM…FGYV, FLPL…YWIF, and TYAM…FFIG.

Belongs to the complex I subunit 5 family.

It is found in the mitochondrion inner membrane. It catalyses the reaction a ubiquinone + NADH + 5 H(+)(in) = a ubiquinol + NAD(+) + 4 H(+)(out). In terms of biological role, core subunit of the mitochondrial membrane respiratory chain NADH dehydrogenase (Complex I) that is believed to belong to the minimal assembly required for catalysis. Complex I functions in the transfer of electrons from NADH to the respiratory chain. The immediate electron acceptor for the enzyme is believed to be ubiquinone. In Rhizopus stolonifer (Rhizopus nigricans), this protein is NADH-ubiquinone oxidoreductase chain 5 (ND5).